The primary structure comprises 142 residues: Large ribosomal subunit protein uL11 (142 aa).

Belongs to the universal ribosomal protein uL11 family. As to quaternary structure, part of the ribosomal stalk of the 50S ribosomal subunit. Interacts with L10 and the large rRNA to form the base of the stalk. L10 forms an elongated spine to which L12 dimers bind in a sequential fashion forming a multimeric L10(L12)X complex. One or more lysine residues are methylated.

In terms of biological role, forms part of the ribosomal stalk which helps the ribosome interact with GTP-bound translation factors. This is Large ribosomal subunit protein uL11 from Hamiltonella defensa subsp. Acyrthosiphon pisum (strain 5AT).